A 227-amino-acid polypeptide reads, in one-letter code: MTSVLIVEDEESLADPLAFLLRKEGFEATVVTDGPAALAEFDRAGADIVLLDLMLPGMSGTDVCKQLRARSSVPVIMVTARDSEIDKVVGLELGADDYVTKPYSARELIARIRAVLRRGGDDDSEMSDGVLESGPVRMDVERHVVSVNGDTITLPLKEFDLLEYLMRNSGRVLTRGQLIDRVWGADYVGDTKTLDVHVKRLRSKIEADPANPVHLVTVRGLGYKLEG.

The region spanning S3–L116 is the Response regulatory domain. 4-aspartylphosphate is present on D52. A DNA-binding region (ompR/PhoB-type) is located at residues D128–G227.

In terms of processing, phosphorylated by SenX3.

Functionally, member of the two-component regulatory system SenX3/RegX3. Specifically binds to the promoter region of the senX3-regX3 operon. This is Sensory transduction protein RegX3 from Mycobacterium bovis (strain ATCC BAA-935 / AF2122/97).